A 356-amino-acid polypeptide reads, in one-letter code: MLCIIIIENMERVCEFCKAYRAVVYCIADTANLCLTCDAKVHSANSLSGRHLRTVLCDSCKNQPCVVRCFDHKMFLCHGCNDKFHGGGSSEHRRRDLRCYTGCPPAKDFAVMWGFRVMDDDDDVSLEQSFRMVKPKVQREGGFILEQILELEKVQLREENGSSSLTERGDPSPLELPKKPEEQLIDLPQTGKELVVDFSHLSSSSTLGDSFWECKSPYNKNNQLWHQNIQDIGVCEDTICSDDDFQIPDIDLTFRNFEEQFGADPEPIADSNNVFFVSSLDKSHEMKTFSSSFNNPIFAPKPASSTISFSSSETDNPYSHSEEVISFCPSLSNNTRQKVITRLKEKKRARVEEKKA.

Zn(2+) contacts are provided by C14, C17, C37, H42, C57, C60, C80, and H85. The B box-type 1; atypical zinc-finger motif lies at 14–56 (CEFCKAYRAVVYCIADTANLCLTCDAKVHSANSLSGRHLRTVL). The segment at 57–97 (CDSCKNQPCVVRCFDHKMFLCHGCNDKFHGGGSSEHRRRDL) adopts a B box-type 2; atypical zinc-finger fold. Residues 159-178 (ENGSSSLTERGDPSPLELPK) form a disordered region.

It belongs to the CONSTANS family.

It is found in the nucleus. This Arabidopsis thaliana (Mouse-ear cress) protein is Putative zinc finger protein At1g68190.